The following is a 521-amino-acid chain: Cytochrome P450 1A1 (521 aa).

Phenylalanine 229 is a substrate binding site. Residue cysteine 463 coordinates heme.

It belongs to the cytochrome P450 family. It depends on heme as a cofactor.

It localises to the endoplasmic reticulum membrane. It is found in the microsome membrane. The enzyme catalyses an organic molecule + reduced [NADPH--hemoprotein reductase] + O2 = an alcohol + oxidized [NADPH--hemoprotein reductase] + H2O + H(+). In terms of biological role, cytochromes P450 are a group of heme-thiolate monooxygenases. They oxidize a variety of structurally unrelated compounds, including steroids, fatty acids, and xenobiotics. The sequence is that of Cytochrome P450 1A1 (cyp1a1) from Chelon saliens (Leaping mullet).